The following is a 263-amino-acid chain: Copper homeostasis protein cutC homolog (263 aa).

The protein belongs to the CutC family.

Involved in copper homeostasis. The polypeptide is Copper homeostasis protein cutC homolog (Drosophila melanogaster (Fruit fly)).